The following is a 271-amino-acid chain: Undecaprenyl-diphosphatase (271 aa).

A run of 8 helical transmembrane segments spans residues 5–25 (YALF…FLPV), 45–65 (AATF…AVFW), 86–106 (TLSL…GLGI), 114–134 (LFGP…LIIA), 149–169 (ISYK…WPGF), 189–209 (AAEF…GLDL), 226–246 (VGFI…LALI), and 251–271 (FIPF…VFVA).

It belongs to the UppP family.

The protein resides in the cell inner membrane. It catalyses the reaction di-trans,octa-cis-undecaprenyl diphosphate + H2O = di-trans,octa-cis-undecaprenyl phosphate + phosphate + H(+). In terms of biological role, catalyzes the dephosphorylation of undecaprenyl diphosphate (UPP). Confers resistance to bacitracin. This is Undecaprenyl-diphosphatase from Aeromonas salmonicida (strain A449).